The primary structure comprises 451 residues: Tubulin alpha chain (451 aa).

Position 11 (glutamine 11) interacts with GTP. Residue lysine 40 is modified to N6-acetyllysine. The GTP site is built by glutamate 71, glycine 144, threonine 145, threonine 179, asparagine 206, and asparagine 228. Glutamate 71 provides a ligand contact to Mg(2+). The active site involves glutamate 254.

Belongs to the tubulin family. In terms of assembly, dimer of alpha and beta chains. A typical microtubule is a hollow water-filled tube with an outer diameter of 25 nm and an inner diameter of 15 nM. Alpha-beta heterodimers associate head-to-tail to form protofilaments running lengthwise along the microtubule wall with the beta-tubulin subunit facing the microtubule plus end conferring a structural polarity. Microtubules usually have 13 protofilaments but different protofilament numbers can be found in some organisms and specialized cells. Mg(2+) serves as cofactor. Post-translationally, undergoes a tyrosination/detyrosination cycle, the cyclic removal and re-addition of a C-terminal tyrosine residue by the enzymes tubulin tyrosine carboxypeptidase (TTCP) and tubulin tyrosine ligase (TTL), respectively. Acetylation of alpha chains at Lys-40 stabilizes microtubules and affects affinity and processivity of microtubule motors. This modification has a role in multiple cellular functions, ranging from cell motility, cell cycle progression or cell differentiation to intracellular trafficking and signaling.

It localises to the cytoplasm. The protein localises to the cytoskeleton. The catalysed reaction is GTP + H2O = GDP + phosphate + H(+). Functionally, tubulin is the major constituent of microtubules, a cylinder consisting of laterally associated linear protofilaments composed of alpha- and beta-tubulin heterodimers. Microtubules grow by the addition of GTP-tubulin dimers to the microtubule end, where a stabilizing cap forms. Below the cap, tubulin dimers are in GDP-bound state, owing to GTPase activity of alpha-tubulin. The polypeptide is Tubulin alpha chain (TUBA) (Chlorella vulgaris (Green alga)).